The following is a 97-amino-acid chain: Coiled-coil domain-containing protein 167 (97 aa).

A coiled-coil region spans residues 10 to 79 (GVALEIDGLE…LRQENRKNML (70 aa)). A helical transmembrane segment spans residues 77–97 (NMLLSVAIFLLLTVIYAYWAL).

It is found in the membrane. The sequence is that of Coiled-coil domain-containing protein 167 (CCDC167) from Bos taurus (Bovine).